We begin with the raw amino-acid sequence, 189 residues long: Large ribosomal subunit protein bL9 (189 aa).

The protein belongs to the bacterial ribosomal protein bL9 family.

Binds to the 23S rRNA. The polypeptide is Large ribosomal subunit protein bL9 (Brucella anthropi (strain ATCC 49188 / DSM 6882 / CCUG 24695 / JCM 21032 / LMG 3331 / NBRC 15819 / NCTC 12168 / Alc 37) (Ochrobactrum anthropi)).